The primary structure comprises 100 residues: Urease subunit gamma (100 aa).

The protein belongs to the urease gamma subunit family. As to quaternary structure, heterotrimer of UreA (gamma), UreB (beta) and UreC (alpha) subunits. Three heterotrimers associate to form the active enzyme.

It localises to the cytoplasm. The enzyme catalyses urea + 2 H2O + H(+) = hydrogencarbonate + 2 NH4(+). It participates in nitrogen metabolism; urea degradation; CO(2) and NH(3) from urea (urease route): step 1/1. The sequence is that of Urease subunit gamma from Acinetobacter baumannii (strain SDF).